Reading from the N-terminus, the 667-residue chain is Long-chain fatty acid transport protein 3 (667 aa).

The chain crosses the membrane as a helical span at residues 3-23 (ALLLLLPLLLLLPLLLKLDVW). The disordered stretch occupies residues 114 to 144 (TGGRRGSGRGSTEEGARVAPPAGDAAARGTT). Positions 130 to 144 (RVAPPAGDAAARGTT) are enriched in low complexity. Residues 272–276 (TSGTT), His-315, Thr-412, Asp-512, Arg-527, and Lys-619 contribute to the ATP site.

This sequence belongs to the ATP-dependent AMP-binding enzyme family. As to expression, expressed at high levels in adrenal gland, testis and ovary. Expressed at lower levels in adult brain. Found in adrenal cortical cells, spermatocytes and interstitial cells of the testis, theca cells of the ovary, cerebral cortical neurons, and cerebellar Purkinje cells (at protein level).

It localises to the mitochondrion membrane. The catalysed reaction is a fatty acid(in) = a fatty acid(out). It carries out the reaction a long-chain fatty acid + ATP + CoA = a long-chain fatty acyl-CoA + AMP + diphosphate. The enzyme catalyses (5Z,8Z,11Z,14Z)-eicosatetraenoate + ATP + CoA = (5Z,8Z,11Z,14Z)-eicosatetraenoyl-CoA + AMP + diphosphate. It catalyses the reaction hexadecanoate + ATP + CoA = hexadecanoyl-CoA + AMP + diphosphate. The catalysed reaction is (9Z)-octadecenoate + ATP + CoA = (9Z)-octadecenoyl-CoA + AMP + diphosphate. It carries out the reaction (9Z,12Z)-octadecadienoate + ATP + CoA = (9Z,12Z)-octadecadienoyl-CoA + AMP + diphosphate. The enzyme catalyses a very long-chain fatty acid + ATP + CoA = a very long-chain fatty acyl-CoA + AMP + diphosphate. It catalyses the reaction tetracosanoate + ATP + CoA = tetracosanoyl-CoA + AMP + diphosphate. In terms of biological role, mainly functions as an acyl-CoA ligase catalyzing the ATP-dependent formation of fatty acyl-CoA using LCFA and very-long-chain fatty acids (VLCFA) as substrates. Can mediate the levels of long-chain fatty acids (LCFA) in the cell by facilitating their transport across membranes. This Mus musculus (Mouse) protein is Long-chain fatty acid transport protein 3 (Slc27a3).